The chain runs to 367 residues: Pectate lyase 1 (367 aa).

The N-terminal stretch at 1–21 is a signal peptide; the sequence is MASPCLIAVLVFLCAIVSCYS. Cysteines 28 and 45 form a disulfide. A beta-helix region spans residues 38–305; sequence NRMKLADCAV…YKKEVTKRIG (268 aa). The igE-binding. Binds to IgE in 5 out of 7 patients tested stretch occupies residues 92–104; sequence IFSQNMNIKLKMP. Cys128 and Cys147 are joined by a disulfide. An N-linked (GlcNAc...) asparagine glycan is attached at Asn148. Asp170 is a binding site for Ca(2+). N-linked (GlcNAc...) asparagine glycosylation is present at Asn178. Residues Asp194 and Asp198 each coordinate Ca(2+). The tract at residues 239 to 250 is igE-binding. Binds to IgE in 6 out of 7 patients tested; it reads AFNQFGPNAGQR. Arg250 is a catalytic residue. The segment at 251–258 is igE-binding. Binds to IgE in 5 out of 7 patients tested; sequence MPRARYGL. An intrachain disulfide couples Cys306 to Cys312. The segment at 317 to 327 is igE-binding. Binds to IgE in 3 out of 7 patients tested; that stretch reads WRSTRDAFING.

The protein belongs to the polysaccharide lyase 1 family. Amb a subfamily. Requires Ca(2+) as cofactor. Post-translationally, N-glycosylated; consists of complex-type N-glycans containing the Lewis a antigen (Galbeta1-3(Fucalpha1-4)GlcNAcbeta1-). As to expression, expressed in pollen (at protein level).

It carries out the reaction Eliminative cleavage of (1-&gt;4)-alpha-D-galacturonan to give oligosaccharides with 4-deoxy-alpha-D-galact-4-enuronosyl groups at their non-reducing ends.. It functions in the pathway glycan metabolism; pectin degradation; 2-dehydro-3-deoxy-D-gluconate from pectin: step 2/5. Has low pectate lyase activity. This is Pectate lyase 1 from Juniperus ashei (Ozark white cedar).